Reading from the N-terminus, the 189-residue chain is Dynactin subunit 6 (189 aa).

This sequence belongs to the dynactin subunits 5/6 family. Dynactin subunit 6 subfamily. As to quaternary structure, subunit of dynactin, a multiprotein complex part of a tripartite complex with dynein and a adapter, such as BICDL1, BICD2 or HOOK3. The dynactin complex is built around ACTR1A/ACTB filament and consists of an actin-related filament composed of a shoulder domain, a pointed end and a barbed end.

The protein resides in the cytoplasm. It localises to the cytoskeleton. In terms of biological role, part of the dynactin complex that activates the molecular motor dynein for ultra-processive transport along microtubules. The protein is Dynactin subunit 6 (dynF) of Dictyostelium discoideum (Social amoeba).